Here is a 58-residue protein sequence, read N- to C-terminus: SPbeta prophage-derived uncharacterized protein YonT (58 aa).

Residues 6–26 (GIVVAFLISLTVLTINSLTIV) traverse the membrane as a helical segment. The segment at 35-58 (GTSKKKKRIRKRLRPKRQRQRIRR) is disordered. A compositionally biased stretch (basic residues) spans 36–58 (TSKKKKRIRKRLRPKRQRQRIRR).

The protein localises to the cell membrane. The sequence is that of SPbeta prophage-derived uncharacterized protein YonT (yonT) from Bacillus subtilis (strain 168).